The primary structure comprises 272 residues: Prephenate dehydratase (272 aa).

In terms of domain architecture, Prephenate dehydratase spans 4 to 179 (AVIYTLPKGT…NKTRFILIGK (176 aa)). An ACT domain is found at 194-269 (IVFELKEDKP…TFINLLGKYP (76 aa)).

Homodimer.

It catalyses the reaction prephenate + H(+) = 3-phenylpyruvate + CO2 + H2O. It functions in the pathway amino-acid biosynthesis; L-phenylalanine biosynthesis; phenylpyruvate from prephenate: step 1/1. Inhibited by L-phenylalanine but not by L-tyrosine or L-tryptophan. The polypeptide is Prephenate dehydratase (pheA) (Methanocaldococcus jannaschii (strain ATCC 43067 / DSM 2661 / JAL-1 / JCM 10045 / NBRC 100440) (Methanococcus jannaschii)).